The following is a 254-amino-acid chain: 3-deoxy-manno-octulosonate cytidylyltransferase (254 aa).

Belongs to the KdsB family.

It localises to the cytoplasm. The catalysed reaction is 3-deoxy-alpha-D-manno-oct-2-ulosonate + CTP = CMP-3-deoxy-beta-D-manno-octulosonate + diphosphate. It participates in nucleotide-sugar biosynthesis; CMP-3-deoxy-D-manno-octulosonate biosynthesis; CMP-3-deoxy-D-manno-octulosonate from 3-deoxy-D-manno-octulosonate and CTP: step 1/1. The protein operates within bacterial outer membrane biogenesis; lipopolysaccharide biosynthesis. Functionally, activates KDO (a required 8-carbon sugar) for incorporation into bacterial lipopolysaccharide in Gram-negative bacteria. In Chlamydia felis (strain Fe/C-56) (Chlamydophila felis), this protein is 3-deoxy-manno-octulosonate cytidylyltransferase.